A 331-amino-acid polypeptide reads, in one-letter code: CRISPR-associated endonuclease Cas1 (331 aa).

Mn(2+) is bound by residues Glu166, His228, and Asp243.

This sequence belongs to the CRISPR-associated endonuclease Cas1 family. In terms of assembly, homodimer, forms a heterotetramer with a Cas2 homodimer. The cofactor is Mg(2+). Mn(2+) serves as cofactor.

In terms of biological role, CRISPR (clustered regularly interspaced short palindromic repeat), is an adaptive immune system that provides protection against mobile genetic elements (viruses, transposable elements and conjugative plasmids). CRISPR clusters contain spacers, sequences complementary to antecedent mobile elements, and target invading nucleic acids. CRISPR clusters are transcribed and processed into CRISPR RNA (crRNA). Acts as a dsDNA endonuclease. Involved in the integration of spacer DNA into the CRISPR cassette. This is CRISPR-associated endonuclease Cas1 from Hyperthermus butylicus (strain DSM 5456 / JCM 9403 / PLM1-5).